We begin with the raw amino-acid sequence, 915 residues long: Rab3 GTPase-activating protein catalytic subunit (915 aa).

Belongs to the Rab3-GAP catalytic subunit family. The Rab3 GTPase-activating complex is a heterodimer composed of rbg-1 and rbg-2.

The protein localises to the cytoplasm. Functionally, probable catalytic subunit of a GTPase activating protein that has specificity for Rab3 subfamily. Rab3 proteins are involved in regulated exocytosis of neurotransmitters and hormones. Specifically converts active Rab3-GTP to the inactive form Rab3-GDP. In Caenorhabditis elegans, this protein is Rab3 GTPase-activating protein catalytic subunit (rbg-1).